We begin with the raw amino-acid sequence, 68 residues long: Coiled-coil domain-containing protein 179 (68 aa).

A disordered region spans residues 11-68 (SQVNPEGPRQHHPSEVTERQLANKRIQNMQHLKKEKRRLNKRFSRPSPIPEPGLLWSS). A compositionally biased stretch (basic and acidic residues) spans 18-28 (PRQHHPSEVTE). Residues 27 to 53 (TERQLANKRIQNMQHLKKEKRRLNKRF) are a coiled coil. A compositionally biased stretch (basic residues) spans 41–54 (HLKKEKRRLNKRFS).

The polypeptide is Coiled-coil domain-containing protein 179 (CCDC179) (Homo sapiens (Human)).